Reading from the N-terminus, the 42-residue chain is uncharacterized protein (42 aa).

This is an uncharacterized protein from Musa (BBTV).